The following is a 146-amino-acid chain: Leghemoglobin Lb120-8 (146 aa).

The 145-residue stretch at 2-146 (GFTEKQEALV…LASAIKKAMN (145 aa)) folds into the Globin domain. Residues Tyr24 and Tyr29 each carry the nitrated tyrosine modification. Ser44 is a binding site for heme b. Phosphoserine is present on Ser44. His61 provides a ligand contact to O2. The heme b site is built by Lys64, His93, and Lys96. Nitrated tyrosine is present on Tyr134.

The protein belongs to the plant globin family. In terms of assembly, monomer. Nitrated in effective nodules and particularly in hypoxic conditions; this mechanism may play a protective role in the symbiosis by buffering toxic peroxynitrite NO(2)(-). Nitration level decrease during nodule senescence. Post-translationally, phosphorylation at Ser-44 disrupts the molecular environment of its porphyrin ring oxygen binding pocket, thus leading to a reduced oxygen consumption and to the delivery of oxygen O(2) to symbiosomes. In terms of tissue distribution, root nodules.

Its subcellular location is the cytoplasm. It localises to the cytosol. The protein localises to the nucleus. Its function is as follows. Leghemoglobin that reversibly binds oxygen O(2) through a pentacoordinated heme iron. In root nodules, facilitates the diffusion of oxygen to the bacteroids while preventing the bacterial nitrogenase from being inactivated by buffering dioxygen, nitric oxide and carbon monoxide, and promoting the formation of reactive oxygen species (ROS, e.g. H(2)O(2)). This role is essential for symbiotic nitrogen fixation (SNF). The polypeptide is Leghemoglobin Lb120-8 (Pisum sativum (Garden pea)).